We begin with the raw amino-acid sequence, 302 residues long: Decaprenyl-phosphate phosphoribosyltransferase (302 aa).

Residue Lys-28 participates in 5-phospho-alpha-D-ribose 1-diphosphate binding. Transmembrane regions (helical) follow at residues 30–50 (VLVL…DYVE) and 55–75 (VSMA…VNDV). Tyr-70 contributes to the 5-phospho-alpha-D-ribose 1-diphosphate binding site. Mg(2+) contacts are provided by Asn-73 and Asp-77. Lys-87 lines the 5-phospho-alpha-D-ribose 1-diphosphate pocket. Helical transmembrane passes span 100–120 (WLAY…AWML) and 122–142 (PNLA…CFGL). Lys-143 and Arg-160 together coordinate 5-phospho-alpha-D-ribose 1-diphosphate. The next 2 membrane-spanning stretches (helical) occupy residues 146 to 166 (AVVE…AGGV) and 170 to 190 (IPLS…MVAG). Residue Lys-191 participates in trans,octa-cis-decaprenyl phosphate binding. The next 3 helical transmembrane spans lie at 218-238 (LRFV…LWAF), 244-264 (SGSW…RYAV), and 282-302 (RVLQ…VAFG).

Belongs to the UbiA prenyltransferase family. DPPR synthase subfamily. As to quaternary structure, homotrimer. Mg(2+) serves as cofactor.

The protein localises to the cell inner membrane. The catalysed reaction is trans,octa-cis-decaprenyl phosphate + 5-phospho-alpha-D-ribose 1-diphosphate + H(+) = trans,octa-cis-decaprenylphospho-beta-D-ribofuranose 5-phosphate + diphosphate. It functions in the pathway cell wall biogenesis; cell wall polysaccharide biosynthesis. Its function is as follows. Involved in the biosynthesis of decaprenylphosphoryl arabinose (DPA) a precursor for arabinan synthesis in mycobacterial cell wall biosynthesis. Catalyzes the transfer of a 5-phosphoribosyl residue from phosphoribose diphosphate (PRPP) to decaprenyl phosphate (DP) to form decaprenylphosphoryl-5-phosphoribose (DPPR). In Mycobacterium tuberculosis (strain CDC 1551 / Oshkosh), this protein is Decaprenyl-phosphate phosphoribosyltransferase.